Consider the following 855-residue polypeptide: Zinc finger protein 814 (855 aa).

The KRAB domain maps to 15-91; that stretch reads VTFEDVAVNF…PMAGVSPKKA (77 aa). A C2H2-type 1; degenerate zinc finger spans residues 120–142; that stretch reads HRCEAWGNKLYDSGNFHQHQNEH. C2H2-type zinc fingers lie at residues 242–264, 269–291, 296–318, 324–346, 352–374, 380–402, 408–430, 436–458, 464–486, 492–514, 520–542, 548–570, 576–598, 604–626, 632–654, 660–682, 688–710, 716–738, 744–766, 772–794, 800–822, and 828–850; these read YVCC…QRVH, HECG…QRVH, YECG…QRVH, YECG…QRFH, YGCE…QRVH, FKCG…QRVH, YQCG…QRVH, YECG…QQIH, YGCG…QRVH, YECG…QRMH, YKCG…QRVH, FKCG…QHGH, YVCR…QRIH, YACE…QRVH, YECN…KRIH, YECS…KRVH, and YKCE…QSSH. K335 is covalently cross-linked (Glycyl lysine isopeptide (Lys-Gly) (interchain with G-Cter in SUMO2)). K391 is covalently cross-linked (Glycyl lysine isopeptide (Lys-Gly) (interchain with G-Cter in SUMO2)).

The sequence is that of Zinc finger protein 814 (ZNF814) from Homo sapiens (Human).